Reading from the N-terminus, the 533-residue chain is Nitrogen fixation protein AnfA (533 aa).

The a domain stretch occupies residues 33–193 (ILYKISQIIT…PLVELYLIEN (161 aa)). Positions 46–186 (DLADALSIVL…MIATMIAPLV (141 aa)) constitute a GAF domain. The Sigma-54 factor interaction domain maps to 219–448 (IIGNSKPMQE…LENVMERAVI (230 aa)). Residues 247-254 (GESGVGKE) and 310-319 (ADGGTIFLDE) contribute to the ATP site. Residues 501-520 (IGEAAKELGLARRMLGVRME) constitute a DNA-binding region (H-T-H motif).

Its function is as follows. AnfA is essential for nitrogen fixation under Mo- and V-deficient conditions. It is required for the regulation of nitrogenase 3 transcription. Interacts with sigma-54. This chain is Nitrogen fixation protein AnfA (anfA), found in Azotobacter vinelandii.